A 143-amino-acid polypeptide reads, in one-letter code: uncharacterized protein (143 aa).

The tract at residues Met-1–Asp-21 is disordered.

This is an uncharacterized protein from Homo sapiens (Human).